Reading from the N-terminus, the 81-residue chain is MAHTVKIYDNCIGCTQCVRACPLDVLEMVPWDGCKAGQMASAPRTEDCVGCKRCETACPTDFLSIRVYLGGETTRSMGLAY.

2 4Fe-4S ferredoxin-type domains span residues 2–31 (AHTVKIYDNCIGCTQCVRACPLDVLEMVPW) and 39–68 (MASAPRTEDCVGCKRCETACPTDFLSIRVY). Residues cysteine 11, cysteine 14, cysteine 17, cysteine 21, cysteine 48, cysteine 51, cysteine 54, and cysteine 58 each coordinate [4Fe-4S] cluster.

In terms of assembly, the eukaryotic PSI reaction center is composed of at least 11 subunits. Requires [4Fe-4S] cluster as cofactor.

It localises to the plastid. The protein resides in the chloroplast thylakoid membrane. It carries out the reaction reduced [plastocyanin] + hnu + oxidized [2Fe-2S]-[ferredoxin] = oxidized [plastocyanin] + reduced [2Fe-2S]-[ferredoxin]. Functionally, apoprotein for the two 4Fe-4S centers FA and FB of photosystem I (PSI); essential for photochemical activity. FB is the terminal electron acceptor of PSI, donating electrons to ferredoxin. The C-terminus interacts with PsaA/B/D and helps assemble the protein into the PSI complex. Required for binding of PsaD and PsaE to PSI. PSI is a plastocyanin/cytochrome c6-ferredoxin oxidoreductase, converting photonic excitation into a charge separation, which transfers an electron from the donor P700 chlorophyll pair to the spectroscopically characterized acceptors A0, A1, FX, FA and FB in turn. The chain is Photosystem I iron-sulfur center from Cyanidioschyzon merolae (strain NIES-3377 / 10D) (Unicellular red alga).